Consider the following 438-residue polypeptide: 3-phosphoshikimate 1-carboxyvinyltransferase (438 aa).

Positions 25, 26, and 30 each coordinate 3-phosphoshikimate. Residue K25 participates in phosphoenolpyruvate binding. G99 and R128 together coordinate phosphoenolpyruvate. 4 residues coordinate 3-phosphoshikimate: S173, Q175, D325, and K352. Q175 contributes to the phosphoenolpyruvate binding site. D325 functions as the Proton acceptor in the catalytic mechanism. 2 residues coordinate phosphoenolpyruvate: R356 and R398.

It belongs to the EPSP synthase family. As to quaternary structure, monomer.

The protein resides in the cytoplasm. It catalyses the reaction 3-phosphoshikimate + phosphoenolpyruvate = 5-O-(1-carboxyvinyl)-3-phosphoshikimate + phosphate. Its pathway is metabolic intermediate biosynthesis; chorismate biosynthesis; chorismate from D-erythrose 4-phosphate and phosphoenolpyruvate: step 6/7. Its function is as follows. Catalyzes the transfer of the enolpyruvyl moiety of phosphoenolpyruvate (PEP) to the 5-hydroxyl of shikimate-3-phosphate (S3P) to produce enolpyruvyl shikimate-3-phosphate and inorganic phosphate. This Prochlorococcus marinus (strain MIT 9515) protein is 3-phosphoshikimate 1-carboxyvinyltransferase.